The primary structure comprises 469 residues: MAPLSLRDCKAWQDAGLTLSTTSNEVCKLFDATLIQYATWKNDSTLGGIEGCLSRINNTDPNFVMGHVAANGLELIGTGRSPLVDKELDDALKTMSDLSKSQALTEREKLHVAAVETFADGNLPKAADLWERILQSHPTDLLALKFAHDCYFYLGEQRQMRDSVARVLPYWKPETPLSSYVKGMYSFGLLETNFYDQALKVAKEALAVERTDSWSVHTIAHVHEMKADLDSGLSFMQETENNWKGSDMLACHVYWHWALYLIEKGDYEAALTLYDNHIAPQCFASGSMLDVVDNSSMLYRLQMEGVNVGDRWKNLVQITKKHTKDHMLIFNDLHFLMSSLGSKDEDTTRQLVESMQELSKSPGEKQQHSLIKHLGAPLCQALIEYNGGNYDKAVDLIYPIRYQILKIGGSDAQRDLFNQVLIQAAINSDSTHHQNLARVLLMERDIGRPNSPLTQRLIKKWEALHGLLG.

TPR repeat units lie at residues 107 to 140, 179 to 212, and 251 to 284; these read REKLHVAAVETFADGNLPKAADLWERILQSHPTD, SYVKGMYSFGLLETNFYDQALKVAKEALAVERTD, and CHVYWHWALYLIEKGDYEAALTLYDNHIAPQCFA.

This sequence belongs to the TTC38 family.

The protein is Tetratricopeptide repeat protein 38 (ttc38) of Xenopus laevis (African clawed frog).